We begin with the raw amino-acid sequence, 384 residues long: F-box/kelch-repeat protein At3g44120 (384 aa).

The F-box domain maps to 1 to 46 (MTLPELPKDLVEEILCFVPATSLKRLRSSCKEWNRLFKDDKRFARK). Kelch repeat units follow at residues 156–202 (CNKS…RECF), 264–314 (SVLV…FLLD), and 352–384 (GVQT…KRDY).

This is F-box/kelch-repeat protein At3g44120 from Arabidopsis thaliana (Mouse-ear cress).